We begin with the raw amino-acid sequence, 154 residues long: Myoglobin (154 aa).

A Globin domain is found at 2–148; the sequence is GLSDGEWQLV…FRKDIAAKYK (147 aa). Ser4 bears the Phosphoserine mark. His65 provides a ligand contact to nitrite. His65 contributes to the O2 binding site. The residue at position 68 (Thr68) is a Phosphothreonine. His94 contacts heme b.

This sequence belongs to the globin family. In terms of assembly, monomeric.

Its subcellular location is the cytoplasm. The protein resides in the sarcoplasm. It catalyses the reaction Fe(III)-heme b-[protein] + nitric oxide + H2O = Fe(II)-heme b-[protein] + nitrite + 2 H(+). The enzyme catalyses H2O2 + AH2 = A + 2 H2O. Monomeric heme protein which primary function is to store oxygen and facilitate its diffusion within muscle tissues. Reversibly binds oxygen through a pentacoordinated heme iron and enables its timely and efficient release as needed during periods of heightened demand. Depending on the oxidative conditions of tissues and cells, and in addition to its ability to bind oxygen, it also has a nitrite reductase activity whereby it regulates the production of bioactive nitric oxide. Under stress conditions, like hypoxia and anoxia, it also protects cells against reactive oxygen species thanks to its pseudoperoxidase activity. This Globicephala melas (Long-finned pilot whale) protein is Myoglobin (MB).